Reading from the N-terminus, the 296-residue chain is Galectin-3 (296 aa).

Residues 1–11 (MADSFSLNDAL) are compositionally biased toward polar residues. Residues 1 to 150 (MADSFSLNDA…PSAPGAYPAA (150 aa)) form a disordered region. Alanine 2 carries the post-translational modification N-acetylalanine. Phosphoserine; by CK1 is present on residues serine 6 and serine 12. Low complexity-rich tracts occupy residues 12–31 (SGSG…NQPA) and 38–47 (GASYPGAYPG). 8 tandem repeats follow at residues 36–44 (YPGASYPGA), 45–53 (YPGQAPPGG), 54–62 (YPGQAPPGG), 63–71 (YPGQAPPGG), 72–80 (YPGQAPPGG), 81–89 (YPGQAPPGG), 90–98 (YPGQAPPGG), and 99–107 (YPGQAPPGT). Residues 36 to 143 (YPGASYPGAY…AYPPPGQPSA (108 aa)) are 12 X 9 AA tandem repeats of Y-P-G-X(3)-P-G-[GAT]. Positions 48–120 (QAPPGGYPGQ…PTAPAYPGPT (73 aa)) are enriched in pro residues. The stretch at 108–115 (YPGPTAPA) is one 9; approximate repeat. The stretch at 116-124 (YPGPTAPGT) is repeat 10. Positions 121–133 (APGTQPGQPSGPG) are enriched in low complexity. An 11; approximate repeat occupies 125–134 (QPGQPSGPGA). A 12; approximate repeat occupies 135 to 143 (YPPPGQPSA). Residues 164 to 294 (YDLPLPGGVK…DIDLTSASYA (131 aa)) enclose the Galectin domain. Residue 227 to 233 (WGKEERQ) coordinates a beta-D-galactoside. A Nuclear export signal motif is present at residues 272-287 (KNLPEISKLGISGDID).

In terms of assembly, probably forms homo- or heterodimers. Interacts with DMBT1. Interacts with CD6 and ALCAM. Forms a complex with the ITGA3, ITGB1 and CSPG4. Interacts with LGALS3BP, LYPD3, ZFTRAF1 and UACA. Interacts with TRIM16; this interaction mediates autophagy of damage endomembranes. Interacts with cargo receptor TMED10; the interaction mediates the translocation from the cytoplasm into the ERGIC (endoplasmic reticulum-Golgi intermediate compartment) and thereby secretion. Interacts with and inhibits by binding NCR3/NKp30. The degree of phosphorylation is higher in the cytoplasmic form than in the nuclear form. In protein isolated from a canine kidney cell line, 90% of the phosphate was on Ser-6 and 10% was on Ser-12.

The protein localises to the cytoplasm. The protein resides in the nucleus. It localises to the secreted. Its function is as follows. Galactose-specific lectin which binds IgE. May mediate with the alpha-3, beta-1 integrin the stimulation by CSPG4 of endothelial cells migration. Together with DMBT1, required for terminal differentiation of columnar epithelial cells during early embryogenesis. In the nucleus: acts as a pre-mRNA splicing factor. Involved in acute inflammatory responses including neutrophil activation and adhesion, chemoattraction of monocytes macrophages, opsonization of apoptotic neutrophils, and activation of mast cells. Together with TRIM16, coordinates the recognition of membrane damage with mobilization of the core autophagy regulators ATG16L1 and BECN1 in response to damaged endomembranes. When secreted, interacts with NK cell-activating receptor NCR3/NKp30 acting as an inhibitory ligand which antagonizes NK cell attack. This Canis lupus familiaris (Dog) protein is Galectin-3 (LGALS3).